We begin with the raw amino-acid sequence, 295 residues long: Ribosomal RNA small subunit methyltransferase A (295 aa).

The S-adenosyl-L-methionine site is built by asparagine 29, leucine 31, glycine 56, glutamate 77, aspartate 102, and asparagine 127.

The protein belongs to the class I-like SAM-binding methyltransferase superfamily. rRNA adenine N(6)-methyltransferase family. RsmA subfamily.

It localises to the cytoplasm. It carries out the reaction adenosine(1518)/adenosine(1519) in 16S rRNA + 4 S-adenosyl-L-methionine = N(6)-dimethyladenosine(1518)/N(6)-dimethyladenosine(1519) in 16S rRNA + 4 S-adenosyl-L-homocysteine + 4 H(+). Specifically dimethylates two adjacent adenosines (A1518 and A1519) in the loop of a conserved hairpin near the 3'-end of 16S rRNA in the 30S particle. May play a critical role in biogenesis of 30S subunits. The chain is Ribosomal RNA small subunit methyltransferase A from Anoxybacillus flavithermus (strain DSM 21510 / WK1).